The chain runs to 211 residues: Riboflavin kinase (211 aa).

Positions 1–81 are H-T-H motif-like; that stretch reads MKCIDRRLIG…DLLRYFNILS (81 aa). The riboflavin kinase stretch occupies residues 82 to 211; the sequence is IRLSGRVVSG…DRVEIEIYLE (130 aa). 91–96 serves as a coordination point for CDP; sequence GLGEGA. 2 residues coordinate Mg(2+): threonine 120 and asparagine 122. FMN contacts are provided by threonine 177 and glutamate 185. 190–193 provides a ligand contact to CDP; it reads FKLR.

This sequence belongs to the archaeal riboflavin kinase family. It depends on Mg(2+) as a cofactor.

The enzyme catalyses riboflavin + CTP = CDP + FMN + H(+). It functions in the pathway cofactor biosynthesis; FMN biosynthesis; FMN from riboflavin (CTP route): step 1/1. In terms of biological role, catalyzes the CTP-dependent phosphorylation of riboflavin (vitamin B2) to form flavin mononucleotide (FMN). The polypeptide is Riboflavin kinase (ribK) (Pyrobaculum islandicum (strain DSM 4184 / JCM 9189 / GEO3)).